The chain runs to 125 residues: Acidic phospholipase A2 5 (125 aa).

A signal peptide is located at residue Ser-1. Positions 2–7 (NRPMPL) are excised as a propeptide. Disulfide bonds link Cys-18/Cys-77, Cys-33/Cys-124, Cys-35/Cys-50, Cys-37/Cys-54, Cys-49/Cys-105, Cys-56/Cys-98, Cys-66/Cys-91, and Cys-84/Cys-96. Residue Phe-28 coordinates N-acetyl-beta-D-glucosamine. Zn(2+) is bound at residue Asp-30. Ca(2+) contacts are provided by Tyr-34 and Gly-36. His-53 and Lys-69 together coordinate N-acetyl-beta-D-glucosamine. His-53 is an active-site residue. A Zn(2+)-binding site is contributed by Glu-76. The active site involves Asp-99. Asn-117 contributes to the Zn(2+) binding site.

In terms of assembly, heterodimer formed between isoform 5 and isoform 6 in presence of zinc ion and monomer in absence of zinc ion. Ca(2+) serves as cofactor. In terms of tissue distribution, expressed by the venom gland.

It is found in the secreted. It carries out the reaction a 1,2-diacyl-sn-glycero-3-phosphocholine + H2O = a 1-acyl-sn-glycero-3-phosphocholine + a fatty acid + H(+). PLA2 catalyzes the calcium-dependent hydrolysis of the 2-acyl groups in 3-sn-phosphoglycerides. This Naja sagittifera (Andaman cobra) protein is Acidic phospholipase A2 5.